Consider the following 314-residue polypeptide: L-lactate dehydrogenase 2 (314 aa).

Residues Val-16, Asp-37, Lys-42, Tyr-68, and 82 to 83 each bind NAD(+); that span reads GV. Positions 85 and 91 each coordinate substrate. Residues Ser-104, 121-123, and Thr-146 each bind NAD(+); that span reads ASN. Position 123–126 (123–126) interacts with substrate; the sequence is NPVD. 151 to 154 contributes to the substrate binding site; it reads DTTR. Arg-156 and His-171 together coordinate beta-D-fructose 1,6-bisphosphate. His-178 functions as the Proton acceptor in the catalytic mechanism. Tyr-223 carries the post-translational modification Phosphotyrosine. Residue Thr-232 coordinates substrate.

The protein belongs to the LDH/MDH superfamily. LDH family. In terms of assembly, homotetramer.

It localises to the cytoplasm. It catalyses the reaction (S)-lactate + NAD(+) = pyruvate + NADH + H(+). It participates in fermentation; pyruvate fermentation to lactate; (S)-lactate from pyruvate: step 1/1. Its activity is regulated as follows. Allosterically activated by fructose 1,6-bisphosphate (FBP). In terms of biological role, catalyzes the conversion of lactate to pyruvate. In Lactococcus lactis subsp. lactis (strain IL1403) (Streptococcus lactis), this protein is L-lactate dehydrogenase 2.